The sequence spans 290 residues: Inner membrane protein YebZ (290 aa).

Over 1–10 the chain is Periplasmic; the sequence is MLAFTWIALR. A helical transmembrane segment spans residues 11–31; sequence FIHFTSLMLVFGFAMYGAWLA. The Cytoplasmic portion of the chain corresponds to 32–49; that stretch reads PLTIRRLLAKRFLRLQQH. A helical membrane pass occupies residues 50-70; sequence AAVWSLISATAMLAVQGGLMG. Over 71-89 the chain is Periplasmic; the sequence is TGWTDVFSPNIWQAVLQTQ. Residues 90 to 110 traverse the membrane as a helical segment; that stretch reads FGGIWLWQIVLALVTLIVALM. Over 111-117 the chain is Cytoplasmic; the sequence is QPRNMPR. Residues 118–138 traverse the membrane as a helical segment; that stretch reads LLFMLTTAQFILLAGVGHATL. Over 139 to 151 the chain is Periplasmic; it reads NEGVTAKIHQTNH. The helical transmembrane segment at 152 to 172 threads the bilayer; the sequence is AIHLICAAAWFGGLLPVLWCM. At 173 to 195 the chain is on the cytoplasmic side; the sequence is QLIKGRWRHQAIQALMRFSWCGH. The helical transmembrane segment at 196–216 threads the bilayer; it reads FAVIGVLASGVLNALLITGFP. The Periplasmic segment spans residues 217 to 222; sequence PTLTTY. A helical membrane pass occupies residues 223-243; sequence WGQLLLLKAILVMIMVVIALA. The Cytoplasmic portion of the chain corresponds to 244 to 260; that stretch reads NRYVLVPRMRQDEDRAA. The helical transmembrane segment at 261-281 threads the bilayer; it reads PWFVWMTKLEWAIGAVVLVII. At 282–290 the chain is on the periplasmic side; the sequence is SLLATLEPF.

It belongs to the CopD family.

The protein localises to the cell inner membrane. This chain is Inner membrane protein YebZ (yebZ), found in Escherichia coli (strain K12).